The chain runs to 196 residues: Transcription repressor OFP10 (196 aa).

Residues 100-159 enclose the OVATE domain; sequence MAKESINPFEDYKKSMNQMIEERYIETESELKELLRCFLDINPSPQHNLIVRAFVDVCSH.

As to expression, expressed in roots, cauline leaves, shoots, stems, flower buds and siliques.

It localises to the nucleus. Transcriptional repressor that may regulate multiple aspects of plant growth and development through the regulation of BEL1-LIKE (BLH) and KNOX TALE (KNAT) homeodomain transcription factors. The protein is Transcription repressor OFP10 (OFP10) of Arabidopsis thaliana (Mouse-ear cress).